Consider the following 140-residue polypeptide: Probable deoxyuridine 5'-triphosphate nucleotidohydrolase (140 aa).

Substrate-binding positions include 62 to 64, 76 to 79, arginine 130, and 135 to 136; these read RSG, GVID, and FG.

The protein belongs to the dUTPase family. In terms of assembly, homotrimer. Mg(2+) is required as a cofactor.

It catalyses the reaction dUTP + H2O = dUMP + diphosphate + H(+). Its pathway is pyrimidine metabolism; dUMP biosynthesis; dUMP from dCTP (dUTP route): step 2/2. Its function is as follows. This enzyme is involved in nucleotide metabolism: it produces dUMP, the immediate precursor of thymidine nucleotides and it decreases the intracellular concentration of dUTP so that uracil cannot be incorporated into DNA. The sequence is that of Probable deoxyuridine 5'-triphosphate nucleotidohydrolase from Schizosaccharomyces pombe (strain 972 / ATCC 24843) (Fission yeast).